A 7067-amino-acid chain; its full sequence is MESLVLGVNEKTHVQLSLPVLQVRDVLVRGFGDSVEEALSEAREHLKNGTCGLVELEKGVLPQLEQPYVFIKRSDALSTNHGHKVVELVAELDGIQFGRSGITLGVLVPHVGETPIAYRNVLLRKNGNKGAGGHSFGIDLKSYDLGDELGTDPIEDYEQNWNTKHGSGALRELTRELNGGVVTRYVDNNFCGPDGYPLECIKDFLARAGKSMCTLSEQLDYIESKRGVYCCREHEHEIVWFTERSEKSYEHQTPFEIKSAKKFDTFKGECPKFVFPLNSKVKVIQPRVEKKKTEGFMGRIRSVYPVATPQECNDMHLSTLMKCNHCDEVSWQTCDFLKATCEQCGTENLVCEGPTTCGYLPTNAVVKMPCPACQDPEVGPEHSVADYHNHSNIETRLRKGGRTKCFGGCVFSYVGCYNKRAYWVPRASANIGANHTGITGENVETLNEDLLEILNRERVNINIVGDFRFNEEVAIILASFSASPSAFIETVKGLDYKSFKVIVESCGNYKVTNGKPVTGAWNIGQQRSILTPLCGFPSQAAGVIRSIFSRTLDAANHSILDLQRAAVTTLDGISEQSLRLVDAMVYTSDLLTNSVVVMAYVTGGLVQQTMQWLSNMLGTAVDKLKPVFTWVEAKLSAGVEFLRDAWEILKFLITGVFDVIKGQIQVATDNIKECVKIFLGVVNKALEMCLDQVTIAGTKLRALNLGEVFIAQSRGLYRQCIRGKEQLQLLMPLKAPKEVTFLEGDAHDTVLTSEEVVLKSGELEALETPIDSFTSGAVVGTPVCINGLMLLELENKEQYCALSPGLLATNNVFRLKGGAPVKGVTFGEDTVLEVQGYKNVKITFELDVRVDKVLNEKCSVYTVESGTEVTEFACVVAEAVVKTLQPVSDLLTPMGIDLDEWSVATFYLFDDAGEEKLSSRMYCSFYPPDEEEDCEECEDEEETCEHEYGTEDDYKGLPLEFGASTETPHVEEEEEEEDWLDDAIEAEPEPEPLPEEPVNQFVGYLKLTDNVAIKCIDIVKEAQSAKPTVIVNAANTHLKHGGGVAGALNKATNGAMQNESDEYIRQNGPLTVGGSCLLSGHNLAEKCLHVVGPNLNAGEDVQLLKRAYENFNSQDVLLAPLLSAGIFGAKPLQSLKMCVEIVRTQVYLAVNDKSLYDQIVLDYLDSLKPKVESPNKEEEPKLEEPKAVQPVAEKPVDVKPKIKACIDEVTTTLEETKFLTNKLLLFADINGKLYQDSQNMLRGEDMSFLEKDAPYIVGDVITSGDITCVIIPAKKSGGTTEMLARALKEVPVAEYITTYPGQGCAGYTLEEAKTALKKCKSAFYVLPSETPNEKEEVLGTVSWNLREMLAHAEETRKLMPICLDVRAIMATIQRKYKGIKVQEGIVDYGVRFFFYTSKEPVASIITKLNSLNEPLVTMPIGYVTHGLNLEEAARCMRSLKAPAVVSVSSPDAVTAYNGYLTSSSKTPEEYFVETTSLAGSYRDWSYSGQRTELGVEFLKRGDKIVYHTTGSPIEFHLDGEVLPLDKLKSLLSLREVKTIKVFTTVDNTNLHTHIVDMSMTYGQQFGPTYLDGADVTKIKPHVNHEGKTFFVLPSDDTLRSEAFEYYHTIDESFLGRYMSALNHTKKWKFPQVGGLTSIKWADNNCYLSSVLLALQQVEVKFNAPALQEAYYRARAGDAANFCALILAYSNKTVGELGDVRETMTHLLQHANLESAKRVLNVVCKHCGQKTTTLKGVEAVMYMGTLSYDELKTGVSIPCVCGRNATQYLVQQESSFVMMSAPPAEYKLQQGAFLCANEYTGNYQCGHYTHITAKETLYRVDGAHLTKMSEYKGPVTDVFYKETSYTTAIKPVSYKLDGVTYTEIEPKLDGYYKKGNAYYTEQPIDLVPTQPMPNASFDNFKLTCSNTKFADDLNQMTGFKKPASRELTVTFFPDLNGDVVAIDYRHYSTSFKKGAKLVHKPILWHINQTTNKTTYKPNIWCLRCLWSTKPVDTSNSFEVLVVEDTQGMDNLACESQTTTSEEVVENPTVQKEIIECDVKTTEVVGNVILKPSEEGVKVTQELGHEDLMAAYVEETSITIKKPNELSLALGLKTLATHGAAAINSVPWSKILAYVKPFLGQTAVITSNCIKKCVQRVFSNYMPYVITLLFQLCTFTKSTNSRIKASLPTTIAKNSVKSVAKLCLDVCINYVKSPKFSKLFTIVMWLLLLSICLGSLTYVTAVLGVCLSSLGVPSYCDGVRELYINSSNVTTMDFCQGYFPCSVCLSGLDSLDSYPALETIQVTISSYKLDLTFLGLAAEWLLAYMLFTKFFYLLGLSAIMQAFFGYFASHFISNSWLMWFIISIVQMAPVSAMVRMYIFFASFYYVWKSYVHIMDGCTSSTCMMCYKRNRATRVECTTIVNGVKRSFYVYANGGRGFCKAHNWNCLNCDTFCAGSTFISDEVARDLSLQFKRPINPTDQSAYVVDSVTVKNGALHLYFDKAGQKTYERHPLSHFVNLDNLRANNTKGSLPINVIVFDGKSKCEESAAKSASVYYSQLMCQPILLLDQALVSDVGDSTEVSVKMFDAYVDTFSATFSVPMEKLKALVATAHSELAKGVALDGVLSTFVSAARQGVVDTDVDTKDVIECLKLSHHSDIEVTGDSCNNFMLTYNKVENMTPRDLGACIDCNARHINAQVAKSHNVSLVWNVKDYMSLSEQLRKQIRSAAKKNNIPFRLTCATTRQVVNVITTKISLKGGKVVSTWFKLLLKVTLLCVLAALFCYVIMPVHSLSVHDGYTNEIIGYKAIQDGVTRDIVSTDDCFANKHAGFDSWFSQRGGSYRNDKNCPVVAAIITREIGFIVPGLPGTVLRALNGDFLHFLPRVFSAVGNICYTPSKLIEYSDFATSACVLAAECTIFKDAMGKPVPYCYDTNLLEGSISYSELRPDTRYVLMDGSIIQFPNTYLEGSVRVVTTFDAEYCRHGTCERSEVGVCLSTSGRWVLNNEHYRALPGVFCGVDAMNLIANIFTPLVQPVGALDVSASVVAGGIIAILVTCAAYYFMKFRRAFGEYNHVVAANALLFLMSFTILCLAPAYSFLPGVYSIFYLYLTFYFTNDVSFLAHLQWFAMFSPIVPFWITAIYVFCISLKHFHWFFSNYLKKRVMFNGVTFSTFEEAALCTFLLNKEMYLRLRSETLLPLTQYNRYLALYNKYKYFSGALDTTSYREAACCHLAKALNDFSNSGADVLYQPPQTSITSAVLQSGFRKMAFPSGKVEGCMVQVTCGTTTLNGLWLDDTVYCPRHVVCTAEDMLNPNYDDLLIRKSNHSFLVQAGNVQLRVIGHSMQNCLLRLKVDTSNPKTPKYKFVRIQPGQTFSVLACYNGSPSGVYQCAMRPNHTIKGSFLNGSCGSVGFNIDYDCVSFCYMHHMELPTGVHAGTDLEGKFYGPFVDRQTAQAAGTDTTITLNVLAWLYAAVINGDRWFLNRFTTTLNDFNLVAMKYNYEPLTQDHVDILGPLSAQTGIAVLDMCAALKELLQNGMNGRTILGSTILEDEFTPFDVVRQCSGVTFQGKFKKIVKGTHHWMLLTFLTSLLILVQSTQWSLFFFVYENAFLPFALGIMAVAACAMLLVKHKHAFLCLFLLPSLATVAYFNMVYMPASWVMRIMTWLELADTSLSGYRLKDCVMYASALVLLILMTARTVYDDAARRVWTLMNVITLVYKVYYGNSLDQAISMWALVISVTSNYSGVVTTIMFLARAIVFVCVEYYPLLFITGNTLQCIMLVYCFLGYCCCCYFGLFCLLNRYFRLTLGVYDYLVSTQEFRYMNSQGLLPPKSSIDAFKLNIKLLGIGGKPCIKVATVQSKMSDVKCTSVVLLSVLQQLRVESSSKLWAQCVQLHNDILLAKDTTEAFEKMVSLLSVLLSMQGAVDINKLCEEMLDNRATLQAIASEFSSLPSYAAYATAQEAYEQAVSNGDSEVVLKKLKKSLNVAKSEFDHDAAMQRKLEKMADQAMTQMYKQARSEDKRAKVTSAMQTMLFTMLRKLDNDALNNIINNARDGCVPLNIIPLTTAAKLMVVVPDYGTYKNTCDGNTFTYASALWEIQQVVDADSKIVQLSEINMDNSPNLAWPLIVTALRANSAVKLQNNELSPVALRQMSCAAGTTQTACTDDNALAYYNNAKGGRFVLALLSDHQDLKWARFPKSDGTGTIYTELEPPCRFVTDTPKGPKVKYLYFIKGLNNLNRGMVLGSLAATVRLQAGNATEVPANSTVLSFCAFAVDPAKAYKDYLASGGQPITNCVKMLCTHTGTGQAITVTPEANMDQESFGGASCCLYCRCHIDHPNPKGFCDLKGKYVQIPTTCANDPVGFTLRNTVCTVCGMWKGYGCSCDQLREPMMQSADASTFLNRVCGVSAARLTPCGTGTSTDVVYRAFDIYNEKVAGFAKFLKTNCCRFQEKDEEGNLLDSYFVVKRHTMSNYQHEETIYNLIKECPAVAVHDFFKFRVDGDMVPHISRQRLTKYTMADLVYALRHFDEGNCDTLKEILVTYNCCDDNYFNKKDWYDFVENPDVLRVYANLGERVRRALLKTVQFCDAMRDAGIVGVLTLDNQDLNGNWYDFGDFVQVAPGCGVPIVDSYYSLLMPILTLTKALAAESHMDADLAKPLVKWDLLKYDFTEERLCLFDRYFKYWDQTYHPNCINCLDDRCILHCANFNVLFSTVFPPTSFGPLVRKIFVDGVPFVVSTGYHFRELGVVHNQDVNLHSSRLSFKELLVYAADPAMHAASGNLLLDKRTTCFSVAALTNNVAFQTVKPGNFNKDFYDFAVSKGFFKEGSSVELKHFFFAQDGNAAISDYDYYRYNLPTMCDIRQLLFVVEVVDKYFDCYDGGCINANQVIVNNLDKSAGFPFNKWGKARLYYDSMSYEDQDALFAYTKRNVIPTITQMNLKYAISAKNRARTVAGVSICSTMTNRQFHQKLLKSIAATRGATVVIGTSKFYGGWHNMLKTVYSDVESPHLMGWDYPKCDRAMPNMLRIMASLILARKHSTCCNLSHRFYRLANECAQVLSEMVMCGGSLYVKPGGTSSGDATTAYANSVFNICQAVTANVNALLSTDGNKIADKYVRNLQHRLYECLYRNRDVDHEFVDEFYAYLRKHFSMMILSDDAVVCYNSNYAAQGLVASIKNFKAVLYYQNNVFMSEAKCWTETDLTRGPHEFCSQHTMLVKQGDDYVYLPYPDPSRILGAGCFVDDIVKTDGTLMIERFVSLAIDAYPLTKHPNQEYADVFHLYLQYIRKLHDELTGHMLDMYSVMLTNDNTSRYWEPEFYEAMYTPHTVLQAVGACVLCNSQTSLRCGACIRRPFLCCKCCYDHVISTSHKLVLSVNPYVCNAPGCDVTDVTQLYLGGMSYYCKSHKPPISFPLCANGQVFGLYKNTCVGSDNVTDFNAIATCDWTNAGDYILANTCTERLKLFAAETLKATEETFKLSYGIATVREVLSDRELYLSWEVGKPRPPLNRNYVFTGYRVTKNSKVQIGEYTFEKGDYGDAVVYRGTTTYKLNVGDYFVLTSHTVMPLSAPTLVPQEHYVRITGLYPTLNISNEFSSNVANYQKIGMQKYSTLQGPPGTGKSHFAIGLALYYPSARIVYTACSHAAVDALCEKALKYLPIDKCSRIIPARARVECFDKFKVNSTLEQYVFCTVNALPETTADIVVFDEISMATNYDLSVVNARLRAKHYVYIGDPAQLPAPRTLLTKGTLEPEYFNSVCRLMKTIGPDMFLGTCRRCPAEIVDTVSALVYDNKLKAHKEKSAQCFKMYYKGVITHDVSSAINRPQIGVVREFLTRNPAWRKAVFISPYNSQNAVASKILGLPTQTVDSSQGSEYDYVIFTQTTETAHSCNVNRFNVAITRAKIGILCIMSDRDLYDKLQFTSLEVPRRNVATLQAENVTGLFKDCSKIITGLHPTQAPTHLSVDTKFKTEGLCVDIPGIPKDMTYRRLISMMGFKMNYQVNGYPNMFITREEAIRHVRAWIGFDVEGCHATRDAVGTNLPLQLGFSTGVNLVAVPTGYVDTENSTEFTRVNAKPPPGDQFKHLIPLMYKGLPWNVVRIKIVQMLSDTLKGLSDRVVFVLWAHGFELTSMKYFVKIGPERTCCLCDKRATCFSTSSDTYACWNHSVGFDYVYNPFMIDVQQWGFTGNLQSNHDQHCQVHGNAHVASCDAIMTRCLAVHECFVKRVDWSVEYPIIGDELKINAACRKVQHMVVKSALLADKFTVLHDIGNPKAIRCVPQAEVDWKFYDAQPCSDKAYKIEELFYSYATHHDKFTDGVCLFWNCNVDRYPANAIVCRFDTRVLSNLNLPGCDGGSLYVNKHAFHTPAFDKSAFTHLKQLPFFYYSDSPCESHGKQVVSDIDYVPLKSATCITRCNLGGAVCRHHANEYRQYLDAYNMMISAGFSLWIYKQFDTYNLWNTFTKLQSLENVAYNVVNKGHFDGQSGEAPVSIINNAVYTKVDGIDVEIFENKTTLPVNVAFELWAKRNIKPVPEIKILNNLGVDIAANNVIWDYKREAPAHVSTIGVCTMTDIAKKPTESACSSLIVLFDGRVEGQVDFFRNARNGVLITEGSVKGLTPSKGPAQASVNGVTLIGESVKTQFNYFKKVDGIIQQLPETYFTQSRDLEDFKPRSQMETDFLELAMDEFIQRYKLEGYAFEHIVYGDFSHGQLGGLHLMIGLAKRSQDSLLKLEDFIPMDSTVKNYFITDAQTGSSKCVCSVIDLLLDDFVEIIKSQDLSVVSKVVKVTIDYAEISFMLWCKDGHVETFYPKLQASQAWQPGVAMPNLYKMQRMLLEKCDLQNYGENAVIPKGIMMNVAKYTQLCQYLNTLTLAVPYNMRVIHFGAGSDKGVAPGTAVLRQWLPTGTLLVDSDLNDFVSDADSTLIGDCATVHTANKWDLIISDMYDPKTKHVLKDNDSKEGFFTYLCGFIKQKLALGGSVAVKITEHSWNADLYKLMGHFSWWTAFVTNVNASSSEAFLIGVNYLGKPKEQIDGYTMHANYIFWRNTNPIQLSSYSLFDMSKFPLKLRGTAVMSLKENQINDMIYSLLEKGRLIIRENNRVVVSSDILVNN.

One can recognise a CoV Nsp1 globular domain in the interval 12–127 (THVQLSLPVL…YRNVLLRKNG (116 aa)). Residues 148–179 (ELGTDPIEDYEQNWNTKHGSGALRELTRELNG) enclose the BetaCoV Nsp1 C-terminal domain. Residues 183 to 456 (TRYVDNNFCG…NEDLLEILNR (274 aa)) enclose the CoV Nsp2 N-terminal domain. Positions 200, 231, 234, 236, 323, 326, 341, 344, 370, 373, 382, and 416 each coordinate Zn(2+). A C2H2 region spans residues 200–236 (CIKDFLARAGKSMCTLSEQLDYIESKRGVYCCREHEH). Residues 323–344 (CNHCDEVSWQTCDFLKATCEQC) form a C4 region. The interval 370-416 (CPACQDPEVGPEHSVADYHNHSNIETRLRKGGRTKCFGGCVFSYVGC) is C2HC. The 231-residue stretch at 458 to 688 (RVNINIVGDF…LGVVNKALEM (231 aa)) folds into the CoV Nsp2 middle domain. In terms of domain architecture, CoV Nsp2 C-terminal spans 690-818 (LDQVTIAGTK…TNNVFRLKGG (129 aa)). Positions 822 to 930 (KGVTFGEDTV…MYCSFYPPDE (109 aa)) constitute a Ubiquitin-like 1 domain. 3 Macro domains span residues 998–1164 (VNQF…LDYL), 1201–1329 (KIKA…LPSE), and 1337–1464 (VLGT…TSSS). Residues 1466-1532 (TPEEYFVETT…PLDKLKSLLS (67 aa)) form the DPUP domain. The Ubiquitin-like 2 domain maps to 1536-1591 (VKTIKVFTTVDNTNLHTHIVDMSMTYGQQFGPTYLDGADVTKIKPHVNHEGKTFFV). The Peptidase C16 domain occupies 1605 to 1869 (YYHTIDESFL…YTEIEPKLDG (265 aa)). The active-site For PL-PRO activity is the Cys-1645. Cys-1723, Cys-1726, Cys-1758, and Cys-1760 together coordinate Zn(2+). The segment at 1723 to 1760 (CKHCGQKTTTLKGVEAVMYMGTLSYDELKTGVSIPCVC) adopts a C4-type zinc-finger fold. Active-site for PL-PRO activity residues include His-1806 and Asp-1820. The Nucleic acid-binding domain occupies 1882-1992 (PIDLVPTQPM…CLWSTKPVDT (111 aa)). The 110-residue stretch at 2017 to 2126 (TTSEEVVENP…LGQTAVITSN (110 aa)) folds into the G2M domain. Positions 2086-2365 (LALGLKTLAT…IFFASFYYVW (280 aa)) are HD1. Residues 2197–2217 (LFTIVMWLLLLSICLGSLTYV) traverse the membrane as a helical segment. A 3Ecto domain is found at 2218-2288 (TAVLGVCLSS…QVTISSYKLD (71 aa)). 2 cysteine pairs are disulfide-bonded: Cys-2234/Cys-2262 and Cys-2253/Cys-2259. Transmembrane regions (helical) follow at residues 2298–2318 (WLLA…SAIM) and 2345–2365 (MAPV…YYVW). The tract at residues 2366 to 2456 (KSYVHIMDGC…QFKRPINPTD (91 aa)) is Y1. The region spanning 2366–2734 (KSYVHIMDGC…ITTKISLKGG (369 aa)) is the CoV Nsp3 Y domain. Residues His-2370, Cys-2375, Cys-2380, Cys-2383, Cys-2416, His-2419, Cys-2423, and Cys-2426 each contribute to the Zn(2+) site. Residues 2370–2383 (HIMDGCTSSTCMMC) are ZF1. Positions 2416 to 2426 (CKAHNWNCLNC) are ZF2. A Y2 region spans residues 2457–2551 (QSAYVVDSVT…LLDQALVSDV (95 aa)). The segment at 2457–2734 (QSAYVVDSVT…ITTKISLKGG (278 aa)) is coV-Y. Residues 2552–2633 (GDSTEVSVKM…ECLKLSHHSD (82 aa)) form a Y3 region. Positions 2634-2734 (IEVTGDSCNN…ITTKISLKGG (101 aa)) are Y4. 7 helical membrane passes run 2744–2764 (LLKV…IMPV), 2986–3006 (PGVF…TPLV), 3016–3036 (ASVV…YYFM), 3048–3068 (VVAA…LAPA), 3071–3091 (FLPG…TNDV), 3099–3119 (WFAM…VFCI), and 3136–3156 (VMFN…TFLL). Positions 2749-3156 (LLCVLAALFC…EEAALCTFLL (408 aa)) are HD2. One can recognise a Nsp4C domain in the interval 3136-3234 (VMFNGVTFST…QTSITSAVLQ (99 aa)). Residues 3235 to 3540 (SGFRKMAFPS…VRQCSGVTFQ (306 aa)) enclose the Peptidase C30 domain. Residues His-3275 and Cys-3379 each act as for 3CL-PRO activity in the active site. Helical transmembrane passes span 3558–3578 (FLTS…FFVY), 3580–3600 (NAFL…MLLV), 3606–3626 (FLCL…MVYM), 3652–3672 (DCVM…RTVY), 3679–3698 (VWTL…GNSL), 3722–3742 (IMFL…LLFI), and 3750–3770 (IMLV…LFCL). Residues 3558–3770 (FLTSLLILVQ…CCCYFGLFCL (213 aa)) form an HD3 region. One can recognise a RdRp Nsp7 cofactor domain in the interval 3831–3913 (SKMSDVKCTS…EMLDNRATLQ (83 aa)). One can recognise a RdRp Nsp8 cofactor domain in the interval 3914-4111 (AIASEFSSLP…LRANSAVKLQ (198 aa)). The Nsp9 ssRNA-binding domain occupies 4112-4224 (NNELSPVALR…GSLAATVRLQ (113 aa)). The ExoN/MTase coactivator domain occupies 4225–4363 (AGNATEVPAN…CDQLREPMMQ (139 aa)). Cys-4298, Cys-4301, His-4307, Cys-4314, Cys-4341, Cys-4344, Cys-4352, and Cys-4354 together coordinate Zn(2+). 2 zinc fingers span residues 4298–4314 (CLYC…KGFC) and 4341–4354 (CTVC…GCSC). In terms of domain architecture, NiRAN spans 4370–4624 (FLNRVCGVSA…AAESHMDADL (255 aa)). Mn(2+) contacts are provided by Asn-4572 and Asp-4581. Positions 4629 to 4727 (VKWDLLKYDF…HNQDVNLHSS (99 aa)) constitute a Nsp12 Interface domain. 5 residues coordinate Zn(2+): His-4658, Cys-4664, Cys-4669, Cys-4673, and Cys-4850. A Nsp12 RNA-dependent RNA polymerase domain is found at 4728–5295 (RLSFKELLVY…AMYTPHTVLQ (568 aa)). Positions 4730 to 4944 (SFKELLVYAA…HQKLLKSIAA (215 aa)) are rdRp Fingers N-ter. The rdRp Palm N-ter stretch occupies residues 4945–4983 (TRGATVVIGTSKFYGGWHNMLKTVYSDVESPHLMGWDYP). In terms of domain architecture, RdRp catalytic spans 4975–5137 (PHLMGWDYPK…CYNSNYAAQG (163 aa)). Residues 4984 to 5042 (KCDRAMPNMLRIMASLILARKHSTCCNLSHRFYRLANECAQVLSEMVMCGGSLYVKPGG) are rdRp Fingers C-ter. Zn(2+) is bound by residues His-5005, Cys-5008, and Cys-5009. Residues 5043–5178 (TSSGDATTAY…TRGPHEFCSQ (136 aa)) are rdRp Palm C-ter. Catalysis depends on residues Ser-5122, Asp-5123, and Asp-5124. The interval 5179-5295 (HTMLVKQGDD…AMYTPHTVLQ (117 aa)) is rdRp Thumb. The CV ZBD domain occupies 5296–5408 (AVGACVLCNS…TDFNAIATCD (113 aa)). Zn(2+) contacts are provided by Cys-5300, Cys-5303, Cys-5311, Cys-5314, Cys-5321, Cys-5324, His-5328, His-5334, Cys-5345, Cys-5350, Cys-5367, and His-5370. The (+)RNA virus helicase ATP-binding domain maps to 5552-5733 (NISNEFSSNV…MKTIGPDMFL (182 aa)). An ATP-binding site is contributed by 5577–5584 (GPPGTGKS). The (+)RNA virus helicase C-terminal domain maps to 5734-5903 (GTCRRCPAEI…TLQAENVTGL (170 aa)). In terms of domain architecture, ExoN spans 5968-6183 (MFITREEAIR…RCLAVHECFV (216 aa)). Catalysis depends on residues Asp-5986, Glu-5988, and Glu-6087. Zn(2+)-binding residues include Cys-6103, Cys-6106, Cys-6122, His-6125, His-6153, Cys-6157, and His-6160. Catalysis depends on residues His-6164 and Asp-6169. Cys-6175 is a Zn(2+) binding site. An N7-MTase domain is found at 6192-6423 (YPIIGDELKI…NLWNTFTKLQ (232 aa)). 6227-6233 (DIGNPKA) is an S-adenosyl-L-methionine binding site. The interval 6310–6324 (CDGGSLYVNKHAFHT) is gpppA-binding. The Zn(2+) site is built by Cys-6348, Cys-6369, Cys-6380, and His-6383. The Nsp15 N-terminal oligomerization domain occupies 6424–6484 (SLENVAYNVV…NVAFELWAKR (61 aa)). The AV-Nsp11N/CoV-Nsp15M domain occupies 6485–6610 (NIKPVPEIKI…YFKKVDGIIQ (126 aa)). The NendoU domain maps to 6627 to 6766 (KPRSQMETDF…KDGHVETFYP (140 aa)). Active-site residues include His-6657, His-6672, Lys-6712, Lys-6815, Asp-6899, Lys-6939, and Glu-6972. Residues 6771-7065 (SQAWQPGVAM…RVVVSSDILV (295 aa)) form the Nidovirus-type SAM-dependent 2'-O-MTase domain.

It belongs to the coronaviruses polyprotein 1ab family. As to quaternary structure, interacts with host PHB and PHB2. Interacts with papain-like protease nsp3 and non-structural protein 6. In terms of assembly, monomer. Homodimer. Only the homodimer shows catalytic activity. As to quaternary structure, interacts with nsp8 and nsp12 to form the replication-transcription complex (RTC): nsp12, nsp7, two subunits of nsp8, and up to two subunits of nsp13. Interacts with nsp7, nsp13 and nsp12 to form the replication-transcription complex (RTC): nsp12, nsp7, two subunits of nsp8, and up to two subunits of nsp13. In terms of assembly, interacts with nsp12. As to quaternary structure, interacts with proofreading exoribonuclease nsp14 and 2'-O-methyltransferase nsp16; these interactions enhance nsp14 and nsp16 enzymatic activities. Interacts with nsp7 and nsp8 to form the replication-transcription complex (RTC): nsp12, nsp7, two subunits of nsp8, and up to two subunits of nsp13. Interacts with nsp9. In terms of assembly, interacts with nsp8 to form the replication-transcription complex (RTC): nsp12, nsp7, two subunits of nsp8, and up to two subunits of nsp13. The cofactor is Mn(2+). Mg(2+) is required as a cofactor. Post-translationally, specific enzymatic cleavages in vivo by its own proteases yield mature proteins. 3CL-PRO and PL-PRO proteinases are autocatalytically processed.

It is found in the host membrane. The protein resides in the host cytoplasm. Its subcellular location is the host perinuclear region. It localises to the host endoplasmic reticulum-Golgi intermediate compartment. It catalyses the reaction RNA(n) + a ribonucleoside 5'-triphosphate = RNA(n+1) + diphosphate. The catalysed reaction is ATP + H2O = ADP + phosphate + H(+). It carries out the reaction Thiol-dependent hydrolysis of ester, thioester, amide, peptide and isopeptide bonds formed by the C-terminal Gly of ubiquitin (a 76-residue protein attached to proteins as an intracellular targeting signal).. The enzyme catalyses a 5'-end (N(7)-methyl 5'-triphosphoguanosine)-ribonucleoside in mRNA + S-adenosyl-L-methionine = a 5'-end (N(7)-methyl 5'-triphosphoguanosine)-(2'-O-methyl-ribonucleoside) in mRNA + S-adenosyl-L-homocysteine + H(+). It catalyses the reaction uridylyl-uridylyl-ribonucleotide-RNA = a 3'-end uridylyl-2',3'-cyclophospho-uridine-RNA + a 5'-end dephospho-ribonucleoside-RNA. The catalysed reaction is a 5'-end diphospho-ribonucleoside in mRNA + GTP + H(+) = a 5'-end (5'-triphosphoguanosine)-ribonucleoside in mRNA + diphosphate. It carries out the reaction a 5'-end (5'-triphosphoguanosine)-ribonucleoside in mRNA + S-adenosyl-L-methionine = a 5'-end (N(7)-methyl 5'-triphosphoguanosine)-ribonucleoside in mRNA + S-adenosyl-L-homocysteine. In terms of biological role, the replicase polyprotein of coronaviruses is a multifunctional protein: it contains the activities necessary for the transcription of negative stranded RNA, leader RNA, subgenomic mRNAs and progeny virion RNA as well as proteinases responsible for the cleavage of the polyprotein into functional products. Its function is as follows. Inhibits host translation by interacting with the 40S ribosomal subunit. The nsp1-40S ribosome complex further induces an endonucleolytic cleavage near the 5'UTR of host mRNAs, targeting them for degradation. Viral mRNAs are not susceptible to nsp1-mediated endonucleolytic RNA cleavage thanks to the presence of a 5'-end leader sequence and are therefore protected from degradation. By suppressing host gene expression, nsp1 facilitates efficient viral gene expression in infected cells and evasion from host immune response. May play a role in the modulation of host cell survival signaling pathway by interacting with host PHB and PHB2. Indeed, these two proteins play a role in maintaining the functional integrity of the mitochondria and protecting cells from various stresses. Functionally, responsible for the cleavages located at the N-terminus of the replicase polyprotein. In addition, PL-PRO possesses a deubiquitinating/deISGylating activity and processes both 'Lys-48'- and 'Lys-63'-linked polyubiquitin chains from cellular substrates. Participates together with nsp4 in the assembly of virally-induced cytoplasmic double-membrane vesicles necessary for viral replication. Antagonizes innate immune induction of type I interferon by blocking the phosphorylation, dimerization and subsequent nuclear translocation of host IRF3. Also prevents host NF-kappa-B signaling. In terms of biological role, participates in the assembly of virally-induced cytoplasmic double-membrane vesicles necessary for viral replication. Its function is as follows. Cleaves the C-terminus of replicase polyprotein at 11 sites. Recognizes substrates containing the core sequence [ILMVF]-Q-|-[SGACN]. Also able to bind an ADP-ribose-1''-phosphate (ADRP). Plays a role in the initial induction of autophagosomes from host endoplasmic reticulum. Later, limits the expansion of these phagosomes that are no longer able to deliver viral components to lysosomes. Functionally, forms a hexadecamer with nsp8 (8 subunits of each) that may participate in viral replication by acting as a primase. Alternatively, may synthesize substantially longer products than oligonucleotide primers. In terms of biological role, forms a hexadecamer with nsp7 (8 subunits of each) that may participate in viral replication by acting as a primase. Alternatively, may synthesize substantially longer products than oligonucleotide primers. Its function is as follows. Forms a primer, NSP9-pU, which is utilized by the polymerase for the initiation of RNA chains. Interacts with ribosome signal recognition particle RNA (SRP). Together with NSP8, suppress protein integration into the cell membrane, thereby disrupting host immune defenses. Plays a pivotal role in viral transcription by stimulating both nsp14 3'-5' exoribonuclease and nsp16 2'-O-methyltransferase activities. Therefore plays an essential role in viral mRNAs cap methylation. Functionally, RNA-directed RNA polymerase that catalyzes the transcription of viral genomic and subgenomic RNAs. Acts in complex with nsp7 and nsp8 to transcribe both the minus and positive strands of genomic RNA. The kinase-like NiRAN domain of NSP12 attaches one or more nucleotides to the amino terminus of NSP9, forming a covalent RNA-protein intermediate that serves as transcription/replication primer. Subgenomic RNAs (sgRNAs) are formed by discontinuous transcription: The polymerase has the ability to pause at transcription-regulating sequences (TRS) and jump to the leader TRS, resulting in a major deletion. This creates a series of subgenomic RNAs that are replicated, transcribed and translated. In addition, Nsp12 is a subunit of the viral RNA capping enzyme that catalyzes the RNA guanylyltransferase reaction for genomic and sub-genomic RNAs. Subsequently, the NiRAN domain transfers RNA to GDP, and forms the core cap structure GpppA-RNA. In terms of biological role, multi-functional protein with a zinc-binding domain in N-terminus displaying RNA and DNA duplex-unwinding activities with 5' to 3' polarity. Activity of helicase is dependent on magnesium. Its function is as follows. Plays a role in viral RNA synthesis through two distinct activities. The N7-guanine methyltransferase activity plays a role in the formation of the cap structure GpppA-RNA. The proofreading exoribonuclease reduces the sensitivity of the virus to RNA mutagens during replication. This activity acts on both ssRNA and dsRNA in a 3'-5' direction. Plays a role in viral transcription/replication and prevents the simultaneous activation of host cell dsRNA sensors, such as MDA5/IFIH1, OAS, and PKR. Acts by degrading the 5'-polyuridines generated during replication of the poly(A) region of viral genomic and subgenomic RNAs. Catalyzes a two-step reaction in which a 2'3'-cyclic phosphate (2'3'-cP) is first generated by 2'-O transesterification, which is then hydrolyzed to a 3'-phosphate (3'-P). If not degraded, poly(U) RNA would hybridize with poly(A) RNA tails and activate host dsRNA sensors. Functionally, methyltransferase that mediates mRNA cap 2'-O-ribose methylation to the 5'-cap structure of viral mRNAs. N7-methyl guanosine cap is a prerequisite for binding of nsp16. Therefore plays an essential role in viral mRNAs cap methylation which is essential to evade immune system. The sequence is that of Replicase polyprotein 1ab (rep) from Bat coronavirus HKU3 (BtCoV).